A 499-amino-acid polypeptide reads, in one-letter code: Aspartyl/glutamyl-tRNA(Asn/Gln) amidotransferase subunit B (499 aa).

The protein belongs to the GatB/GatE family. GatB subfamily. Heterotrimer of A, B and C subunits.

The enzyme catalyses L-glutamyl-tRNA(Gln) + L-glutamine + ATP + H2O = L-glutaminyl-tRNA(Gln) + L-glutamate + ADP + phosphate + H(+). It carries out the reaction L-aspartyl-tRNA(Asn) + L-glutamine + ATP + H2O = L-asparaginyl-tRNA(Asn) + L-glutamate + ADP + phosphate + 2 H(+). Its function is as follows. Allows the formation of correctly charged Asn-tRNA(Asn) or Gln-tRNA(Gln) through the transamidation of misacylated Asp-tRNA(Asn) or Glu-tRNA(Gln) in organisms which lack either or both of asparaginyl-tRNA or glutaminyl-tRNA synthetases. The reaction takes place in the presence of glutamine and ATP through an activated phospho-Asp-tRNA(Asn) or phospho-Glu-tRNA(Gln). This Mesorhizobium japonicum (strain LMG 29417 / CECT 9101 / MAFF 303099) (Mesorhizobium loti (strain MAFF 303099)) protein is Aspartyl/glutamyl-tRNA(Asn/Gln) amidotransferase subunit B.